The primary structure comprises 306 residues: NAD kinase 1 (306 aa).

The active-site Proton acceptor is Asp-67. Residues 67 to 68 (DG), 149 to 150 (NE), Asp-181, and 192 to 197 (TGYTVS) contribute to the NAD(+) site.

The protein belongs to the NAD kinase family. A divalent metal cation serves as cofactor.

It localises to the cytoplasm. It carries out the reaction NAD(+) + ATP = ADP + NADP(+) + H(+). Involved in the regulation of the intracellular balance of NAD and NADP, and is a key enzyme in the biosynthesis of NADP. Catalyzes specifically the phosphorylation on 2'-hydroxyl of the adenosine moiety of NAD to yield NADP. This chain is NAD kinase 1, found in Trichormus variabilis (strain ATCC 29413 / PCC 7937) (Anabaena variabilis).